The following is a 272-amino-acid chain: MRYIIILAVLFINSIHAKITSYKFESVNFDSKIEWTGDGLYNISLKNYGIKTWQTMYTNVPEGTYDISAFPKNDFVSFWVKFEQGDYKVEEYCTGLCVEVKIGPPTVTLTEYDDHINLYIEHPYATRGSKKIPIYKRGDMCDIYLLYTANFTFGDSEEPVTYDIDDYDCTSTGCSIDFATTEKVCVTAQGATEGFLEKITPWSSEVCLTPKKNVYTCAIRSKEDVPNFKDKMARVIKRKFNKQSQSYLTKFLGSTSNDVTTFLSMLNLTKYS.

The signal sequence occupies residues 1 to 13; that stretch reads MRYIIILAVLFIN. 3 N-linked (GlcNAc...) asparagine; by host glycosylation sites follow: Asn-42, Asn-150, and Asn-267.

This sequence belongs to the type II cytokine receptor family. As to quaternary structure, homodimer. Interacts with host IFNG.

It is found in the secreted. In terms of biological role, counteracts the antiviral effects of host IFN-gamma. Acts as a soluble IFN-gamma receptor and thus inhibits the interaction between host IFN-gamma and its receptor. The protein is Soluble interferon gamma receptor OPG193 (OPG193) of Homo sapiens (Human).